A 460-amino-acid chain; its full sequence is Cell death abnormality protein 8 (460 aa).

Residues 1 to 45 (MYLKKHESKLLLIPKNEDKEDAGIIAVLTDRVPSVLIVRWFDLFC) are Cytoplasmic-facing. Residues 46-66 (FGFAMCSYVLDFFSDIGIAIF) traverse the membrane as a helical segment. The Extracellular segment spans residues 67-77 (HFWAGRHLSGA). Residues 78-98 (LVLTFALIPSVIINIISMVWM) traverse the membrane as a helical segment. Over 99–123 (LDDEMHWKRRAHPRRTGTFELNQKR) the chain is Cytoplasmic. Residues 124-144 (FISLGKMITLCIFQMGPLFWY) traverse the membrane as a helical segment. The Extracellular segment spans residues 145–219 (YKALYYGWMF…YYISGKYPYW (75 aa)). Residues 220-240 (LYFQAASLTLSIISISWSVVV) traverse the membrane as a helical segment. Residues 241–274 (QNRSLRMTRDDKVNIWPHEAVLQFCWRFLTILAR) lie on the Cytoplasmic side of the membrane. The helical transmembrane segment at 275–295 (IITLVAFVLLFGIYVVFLIFG) threads the bilayer. Residues 296–320 (HLIVTLVHVIFLQALHIEACTHIEK) lie on the Extracellular side of the membrane. A helical transmembrane segment spans residues 321–341 (LLLLINAMIHLFTPFNMAEGN). Over 342-353 (TRYRYLVAYTVE) the chain is Cytoplasmic. The helical transmembrane segment at 354-374 (FIEMMIIFLLLPTPLDAFPLI) threads the bilayer. Residues 375–378 (EKIR) lie on the Extracellular side of the membrane. The helical transmembrane segment at 379–399 (IGVPATFFIGIFIMLIYYKFF) threads the bilayer. Topologically, residues 400–460 (HPNRRQDLEA…SLLEEDECHN (61 aa)) are cytoplasmic.

The protein belongs to the XK family. Cleavage by ced-3 activates ced-8 function in promoting phosphatidylserine exposure at the surface of apoptotic cells.

The protein localises to the cell membrane. Its function is as follows. Acts downstream of ced-9 and caspase ced-3 to promote phosphatidylserine exposure on apoptotic cell surface, possibly by mediating phospholipid scrambling. Phosphatidylserine is a specific marker only present at the surface of apoptotic cells and acts as a specific signal for engulfment. Regulates apoptosis kinetics during embryonic development. Not required for engulfment of germ cell corpses. This is Cell death abnormality protein 8 from Caenorhabditis briggsae.